The following is a 383-amino-acid chain: Acetylornithine deacetylase (383 aa).

Histidine 80 is a Zn(2+) binding site. The active site involves aspartate 82. Aspartate 112 is a binding site for Zn(2+). Glutamate 144 is a catalytic residue. The Zn(2+) site is built by glutamate 145, glutamate 169, and histidine 355.

This sequence belongs to the peptidase M20A family. ArgE subfamily. As to quaternary structure, homodimer. Zn(2+) serves as cofactor. Co(2+) is required as a cofactor. It depends on glutathione as a cofactor.

The protein resides in the cytoplasm. The enzyme catalyses N(2)-acetyl-L-ornithine + H2O = L-ornithine + acetate. The protein operates within amino-acid biosynthesis; L-arginine biosynthesis; L-ornithine from N(2)-acetyl-L-ornithine (linear): step 1/1. Catalyzes the hydrolysis of the amide bond of N(2)-acetylated L-amino acids. Cleaves the acetyl group from N-acetyl-L-ornithine to form L-ornithine, an intermediate in L-arginine biosynthesis pathway, and a branchpoint in the synthesis of polyamines. In Shigella dysenteriae serotype 1 (strain Sd197), this protein is Acetylornithine deacetylase.